The chain runs to 507 residues: Sugar transport protein 6 (507 aa).

Residues 1-20 lie on the Cytoplasmic side of the membrane; the sequence is MAVVVSNANAPAFEAKMTVY. Helical transmembrane passes span 21–41, 78–98, 115–135, 138–158, 165–185, 199–219, 280–300, 318–338, 345–365, 381–401, 418–438, and 447–467; these read VFIC…DIGI, FLQL…FVAS, IFFL…MLII, LFLG…LSEI, GGLN…ANIV, IALG…LLII, FIIG…AIMF, LSAV…IYLV, FLLL…GIIL, LVVV…WGPL, GFAV…QAFL, and GIFF…FFFI. At 468–507 the chain is on the cytoplasmic side; the sequence is PETKGIAIDDMRESVWKPHWFWKRYMLPEDDHHDIEKRNA.

This sequence belongs to the major facilitator superfamily. Sugar transporter (TC 2.A.1.1) family. As to expression, pollen specific.

It localises to the membrane. Inhibited by uncouplers such as 2,4-dinitrophenol and carbonyl cyanide-m-chlorophenyl-hydrazone. Its function is as follows. Mediates an active uptake of hexoses, probably by sugar/hydrogen symport. Can transport glucose, 3-O-methylglucose, mannose, fructose and galactose, and, to a lower extent, xylose and ribulose. This chain is Sugar transport protein 6 (STP6), found in Arabidopsis thaliana (Mouse-ear cress).